A 553-amino-acid polypeptide reads, in one-letter code: Mucolipin-3 (553 aa).

Residues 1 to 62 (MANPEVLVSS…FWARGRKPWK (62 aa)) are Cytoplasmic-facing. The tract at residues 52–62 (KFWARGRKPWK) is interaction with phosphoinositides. A helical membrane pass occupies residues 63–83 (LAIQILKIAMVTIQLVLFGLS). The Extracellular segment spans residues 84–283 (NQMVVAFKEE…VSGSIQKNTH (200 aa)). Positions 104-118 (KGYMDRMDDTYAVYT) are extracellular/lumenal pore loop. A glycan (N-linked (GlcNAc...) asparagine) is linked at asparagine 138. A disulfide bridge connects residues cysteine 159 and cysteine 185. N-linked (GlcNAc...) asparagine glycosylation is present at asparagine 205. A disulfide bridge connects residues cysteine 238 and cysteine 269. A helical transmembrane segment spans residues 284–304 (YMMIFDAFVILTCLASLVLCA). Over 305–341 (RSVIRGLQLQQEFVNFFLLHYKKEVSASDQMEFINGW) the chain is Cytoplasmic. The chain crosses the membrane as a helical span at residues 342 to 362 (YIMIIISDILTIVGSVLKMEI). The Extracellular portion of the chain corresponds to 363–371 (QAKSLTSYD). The chain crosses the membrane as a helical span at residues 372–392 (VCSILLGTSTMLVWLGVIRYL). The Cytoplasmic portion of the chain corresponds to 393–414 (GFFAKYNLLILTLQAALPNVMR). Residues 415-435 (FCCCAAMIYLGYCFCGWIVLG) form a helical membrane-spanning segment. At 436–443 (PYHEKFRS) the chain is on the extracellular side. The segment at residues 444–464 (LNRVSECLFSLINGDDMFSTF) is an intramembrane region (pore-forming). The short motif at 456-459 (NGDD) is the Selectivity filter element. Residues 465-475 (AKMQQKSYLVW) are Extracellular-facing. The chain crosses the membrane as a helical span at residues 476 to 497 (LFSRVYLYSFISLFIYMILSLF). The Cytoplasmic portion of the chain corresponds to 498-553 (IALITDTYETIKHYQQDGFPETELRKFIAECKDLPNSGKYRLEDDPPGSLLCCCKK).

Belongs to the transient receptor (TC 1.A.4) family. Polycystin subfamily. MCOLN3 sub-subfamily. Homotetramer. Can heterooligomerize with MCOLN1; heteromeric assemblies have different channel properties as compared to the respective homooligomers and may be tissue-specific. May heterooligomerize with TRPV5 to form a functional distinct ion channel. Interacts with GABARAPL2. In terms of processing, N-glycosylated. Expressed in the cochlea; particularly in the inner and outer hair cells (at protein level).

It is found in the early endosome membrane. The protein resides in the late endosome membrane. It localises to the cytoplasmic vesicle. Its subcellular location is the autophagosome membrane. The protein localises to the cell projection. It is found in the stereocilium membrane. It catalyses the reaction Ca(2+)(in) = Ca(2+)(out). The enzyme catalyses Mg(2+)(in) = Mg(2+)(out). The catalysed reaction is K(+)(in) = K(+)(out). It carries out the reaction Na(+)(in) = Na(+)(out). Its activity is regulated as follows. Channel activity is activated by PtdIns(3,5)P2 (phosphatidylinositol 3,5-bisphosphate). Inhibited by lumenal H(+) and Na(+). The channel pore shows dynamic behavior and undergoes spontaneous, Ca(2+)-dependent modulation when conducting Ca(2+). Its function is as follows. Nonselective cation channel probably playing a role in the regulation of membrane trafficking events. Acts as a Ca(2+)-permeable cation channel with inwardly rectifying activity. Mediates release of Ca(2+) from endosomes to the cytoplasm, contributes to endosomal acidification and is involved in the regulation of membrane trafficking and fusion in the endosomal pathway. Also permeable to Mg(2+), Na(+) and K(+). Does not seem to act as mechanosensory transduction channel in inner ear sensory hair cells. Proposed to play a critical role at the cochlear stereocilia ankle-link region during hair-bundle growth. Involved in the regulation of autophagy. Through association with GABARAPL2 may be involved in autophagosome formation possibly providing Ca(2+) for the fusion process. Through a possible and probably tissue-specific heteromerization with MCOLN1 may be at least in part involved in many lysosome-dependent cellular events. Possible heteromeric ion channel assemblies with TRPV5 show pharmacological similarity with TRPML3. This Mus musculus (Mouse) protein is Mucolipin-3 (Mcoln3).